The following is a 280-amino-acid chain: MLIARSIADLRQALAPYRHPAFVPTMGNLHDGHIALMRLAKPLGDVTVASIFVNRLQFLPHEDFDSYPRTWEADCAQLQAVGCDLLFAPREADLYPQPQTFKLHPDPALADRLEGQFRPGFFVGVGTVVLKLFACVLGKTGGTAVFGKKDYQQLMVIRQMVQQLALPIEIVAGETCRAADGLALSSRNGFLSLAERQEAVALPLALQQLARRWREARNPGPALEQQALDALRARGWQPDYLTVCRRADLQPATAQDAPGTLVALGAARLATTRLIDNLEF.

M26–H33 contributes to the ATP binding site. H33 acts as the Proton donor in catalysis. A (R)-pantoate-binding site is contributed by Q57. Q57 lines the beta-alanine pocket. G147–D150 serves as a coordination point for ATP. Q153 lines the (R)-pantoate pocket. L184–R187 contacts ATP.

It belongs to the pantothenate synthetase family. Homodimer.

The protein localises to the cytoplasm. It catalyses the reaction (R)-pantoate + beta-alanine + ATP = (R)-pantothenate + AMP + diphosphate + H(+). Its pathway is cofactor biosynthesis; (R)-pantothenate biosynthesis; (R)-pantothenate from (R)-pantoate and beta-alanine: step 1/1. Catalyzes the condensation of pantoate with beta-alanine in an ATP-dependent reaction via a pantoyl-adenylate intermediate. This is Pantothenate synthetase from Verminephrobacter eiseniae (strain EF01-2).